The chain runs to 341 residues: Glycerol-3-phosphate dehydrogenase [NAD(P)+] 1 (341 aa).

NADPH is bound by residues S11, W12, R32, R33, and K106. K106, G137, and S139 together coordinate sn-glycerol 3-phosphate. A141 lines the NADPH pocket. Sn-glycerol 3-phosphate is bound by residues K192, D245, S255, R256, and N257. The active-site Proton acceptor is the K192. An NADPH-binding site is contributed by R256. 2 residues coordinate NADPH: V280 and E282.

The protein belongs to the NAD-dependent glycerol-3-phosphate dehydrogenase family.

The protein resides in the cytoplasm. It carries out the reaction sn-glycerol 3-phosphate + NAD(+) = dihydroxyacetone phosphate + NADH + H(+). It catalyses the reaction sn-glycerol 3-phosphate + NADP(+) = dihydroxyacetone phosphate + NADPH + H(+). Its pathway is membrane lipid metabolism; glycerophospholipid metabolism. Functionally, catalyzes the reduction of the glycolytic intermediate dihydroxyacetone phosphate (DHAP) to sn-glycerol 3-phosphate (G3P), the key precursor for phospholipid synthesis. The sequence is that of Glycerol-3-phosphate dehydrogenase [NAD(P)+] 1 from Salinibacter ruber (strain DSM 13855 / M31).